The following is a 130-amino-acid chain: Hypocretin neuropeptide precursor (130 aa).

The N-terminal stretch at methionine 1–alanine 32 is a signal peptide. Residue glutamine 33 is modified to Pyrrolidone carboxylic acid. 2 disulfides stabilise this stretch: cysteine 38/cysteine 44 and cysteine 39/cysteine 46. A Leucine amide modification is found at leucine 65. Methionine amide is present on methionine 96. A propeptide spans glycine 97–valine 130 (removed in mature form).

Belongs to the orexin family. Post-translationally, specific enzymatic cleavages at paired basic residues yield the different active peptides.

Its subcellular location is the rough endoplasmic reticulum. It localises to the cytoplasmic vesicle. The protein resides in the synapse. Its function is as follows. Neuropeptides that play a significant role in the regulation of food intake and sleep-wakefulness, possibly by coordinating the complex behavioral and physiologic responses of these complementary homeostatic functions. A broader role in the homeostatic regulation of energy metabolism, autonomic function, hormonal balance and the regulation of body fluids, is also suggested. Functionally, binds to orexin receptors HCRTR1/OX1R and HCRTR2/OX2R with a high affinity. Stimulates food intake. Modulates pituitary luteinizing hormone secretion in an ovarian steroid-dependent manner. In terms of biological role, binds to orexin receptor HCRTR2/OX2R only. Stimulates food intake. Modulates pituitary luteinizing hormone secretion in an ovarian steroid-dependent manner. This is Hypocretin neuropeptide precursor (HCRT) from Canis lupus familiaris (Dog).